Consider the following 1341-residue polypeptide: WD repeat-containing protein 19 (1341 aa).

6 WD repeats span residues 11–51, 52–92, 95–134, 137–175, 273–311, and 317–356; these read SWLG…RSEI, SLPG…TSQL, GMRD…KIPV, KHTK…IRQT, DHKD…DMYA, and DENK…LGDA. TPR repeat units follow at residues 736 to 769, 775 to 808, 840 to 873, 895 to 928, 951 to 984, and 1020 to 1053; these read AQDL…AKRL, PFIS…DNKE, RVLK…DRAA, PKIH…NSVI, LDGA…NEAF, and EKRH…EDNV.

As to quaternary structure, component of the IFT complex A (IFT-A) complex. IFT-A complex is divided into a core subcomplex composed of IFT122:IFT140:WDR19 which is associated with TULP3 and a peripheral subcomplex composed of IFT43:WDR35:TTC21B. Interacts (via C-terminal region) with IFT122 (via C-terminal region). Interacts with BBS1. Interacts with TTC25. Tissue-specific expression of isoforms. Expressed in the prostate, testis, epididymis, submaxillary and salivary glands. Expressed in ependymal cells lining brain ventricles (at protein level).

The protein resides in the cell projection. It is found in the cilium. The protein localises to the cytoplasm. It localises to the cytoskeleton. Its subcellular location is the cilium basal body. The protein resides in the photoreceptor outer segment. It is found in the flagellum. As component of the IFT complex A (IFT-A), a complex required for retrograde ciliary transport and entry into cilia of G protein-coupled receptors (GPCRs), it is involved in cilia function and/or assembly. Essential for functional IFT-A assembly and ciliary entry of GPCRs. Associates with the BBSome complex to mediate ciliary transport. The polypeptide is WD repeat-containing protein 19 (Mus musculus (Mouse)).